The sequence spans 239 residues: MLPSIAKHAASHQINPLKKHGQNFIFDSSLCDKIVRASNLAENSRVLEIGPGTGGLTRSILQKNPASLTVIETDERCIPLLNEIKEYYPNLNIIKQDALKINLTDLGYDKVTIISNLPYHIGTELVIRWLKEARLITNMTLMLQKEVVERICAMPSTKAYGRLSVICQLITKVEKCFDVAPTAFYPPPKVYSAIVKLIPLENPPSIALINKVEQITKLAFAGRRKMIKSSLKNLVPNIH.

The S-adenosyl-L-methionine site is built by Asn23, Ile25, Gly50, Glu72, Asp97, and Asn116.

The protein belongs to the class I-like SAM-binding methyltransferase superfamily. rRNA adenine N(6)-methyltransferase family. RsmA subfamily.

It is found in the cytoplasm. It carries out the reaction adenosine(1518)/adenosine(1519) in 16S rRNA + 4 S-adenosyl-L-methionine = N(6)-dimethyladenosine(1518)/N(6)-dimethyladenosine(1519) in 16S rRNA + 4 S-adenosyl-L-homocysteine + 4 H(+). Functionally, specifically dimethylates two adjacent adenosines (A1518 and A1519) in the loop of a conserved hairpin near the 3'-end of 16S rRNA in the 30S particle. May play a critical role in biogenesis of 30S subunits. The chain is Ribosomal RNA small subunit methyltransferase A from Rickettsia felis (strain ATCC VR-1525 / URRWXCal2) (Rickettsia azadi).